We begin with the raw amino-acid sequence, 360 residues long: Teichoic acids export ATP-binding protein TagH (360 aa).

In terms of domain architecture, ABC transporter spans Leu-24–Lys-245. ATP is bound at residue Gly-59 to Ser-66. Residues Leu-246 to Leu-360 form a unknown region. Residues Glu-270 to Pro-290 are disordered.

The protein belongs to the ABC transporter superfamily. Teichoic acids exporter (TC 3.A.1.104.1) family. In terms of assembly, the complex is composed of two ATP-binding proteins (TagH) and two transmembrane proteins (TagG).

It localises to the cell membrane. It carries out the reaction ATP + H2O + teichoic acidSide 1 = ADP + phosphate + teichoic acidSide 2.. Part of the ABC transporter complex TagGH involved in teichoic acids export. Responsible for energy coupling to the transport system. The protein is Teichoic acids export ATP-binding protein TagH of Shouchella clausii (strain KSM-K16) (Alkalihalobacillus clausii).